Reading from the N-terminus, the 481-residue chain is Phosphatidylinositol 4-kinase type 2-beta (481 aa).

Residues 1–11 are compositionally biased toward basic and acidic residues; the sequence is MEDPSEPDRLA. Positions 1 to 82 are disordered; the sequence is MEDPSEPDRL…VSRSSSAELD (82 aa). Residues Ser-12, Ser-17, and Ser-45 each carry the phosphoserine modification. The segment covering 53 to 64 has biased composition (acidic residues); sequence AGEEGEAGDEEL. A PI3K/PI4K catalytic domain is found at 120–451; sequence GIFPERISQG…VQIPCVIVER (332 aa). The segment at 126-132 is G-loop; the sequence is ISQGSSG. 2 residues coordinate ATP: Ser-133 and Lys-148. An important for substrate binding region spans residues 153-155; it reads EPY. The tract at residues 161–174 is important for interaction with membranes; it reads KWTKYVHKVCCPCC. ATP is bound by residues 257–260 and 271–272; these read QLFV and RK. Residues 264-272 are important for interaction with membranes; it reads KEAEYWLRK. A catalytic loop region spans residues 301-309; sequence RNTDRGNDN. The segment at 342–362 is activation loop; sequence AIDNGLAFPFKHPDEWRAYPF. Asp-344 serves as a coordination point for ATP. The important for interaction with membranes stretch occupies residues 357–366; it reads WRAYPFHWAW.

It belongs to the PI3/PI4-kinase family. Type II PI4K subfamily. In terms of tissue distribution, widely expressed.

The protein resides in the cytoplasm. The protein localises to the cytosol. Its subcellular location is the golgi apparatus membrane. It localises to the endoplasmic reticulum membrane. It is found in the cell membrane. The protein resides in the early endosome membrane. The catalysed reaction is a 1,2-diacyl-sn-glycero-3-phospho-(1D-myo-inositol) + ATP = a 1,2-diacyl-sn-glycero-3-phospho-(1D-myo-inositol 4-phosphate) + ADP + H(+). With respect to regulation, inhibited by phenylarsine oxide and adenosine. Activation through membrane association is stimulated by active RAC1. Functionally, together with PI4K2A and the type III PI4Ks (PIK4CA and PIK4CB) it contributes to the overall PI4-kinase activity of the cell. This contribution may be especially significant in plasma membrane, endosomal and Golgi compartments. The phosphorylation of phosphatidylinositol (PI) to PI4P is the first committed step in the generation of phosphatidylinositol 4,5-bisphosphate (PIP2), a precursor of the second messenger inositol 1,4,5-trisphosphate (InsP3). Contributes to the production of InsP3 in stimulated cells and is likely to be involved in the regulation of vesicular trafficking. The protein is Phosphatidylinositol 4-kinase type 2-beta (PI4K2B) of Homo sapiens (Human).